Here is a 148-residue protein sequence, read N- to C-terminus: Transcriptional regulator MraZ (148 aa).

2 consecutive SpoVT-AbrB domains span residues 5-53 (ETAI…AESE) and 82-125 (AAHL…SEQA).

Belongs to the MraZ family. As to quaternary structure, forms oligomers.

Its subcellular location is the cytoplasm. It localises to the nucleoid. The sequence is that of Transcriptional regulator MraZ from Stenotrophomonas maltophilia (strain R551-3).